The following is a 119-amino-acid chain: Holo-[acyl-carrier-protein] synthase (119 aa).

Residues Asp6 and Glu51 each contribute to the Mg(2+) site.

It belongs to the P-Pant transferase superfamily. AcpS family. Requires Mg(2+) as cofactor.

The protein resides in the cytoplasm. It catalyses the reaction apo-[ACP] + CoA = holo-[ACP] + adenosine 3',5'-bisphosphate + H(+). Its function is as follows. Transfers the 4'-phosphopantetheine moiety from coenzyme A to a Ser of acyl-carrier-protein. This Sulfurovum sp. (strain NBC37-1) protein is Holo-[acyl-carrier-protein] synthase.